A 274-amino-acid polypeptide reads, in one-letter code: 2,3,4,5-tetrahydropyridine-2,6-dicarboxylate N-succinyltransferase (274 aa).

Residues R104 and D141 each coordinate substrate.

It belongs to the transferase hexapeptide repeat family. As to quaternary structure, homotrimer.

It is found in the cytoplasm. The catalysed reaction is (S)-2,3,4,5-tetrahydrodipicolinate + succinyl-CoA + H2O = (S)-2-succinylamino-6-oxoheptanedioate + CoA. Its pathway is amino-acid biosynthesis; L-lysine biosynthesis via DAP pathway; LL-2,6-diaminopimelate from (S)-tetrahydrodipicolinate (succinylase route): step 1/3. The polypeptide is 2,3,4,5-tetrahydropyridine-2,6-dicarboxylate N-succinyltransferase (Citrobacter koseri (strain ATCC BAA-895 / CDC 4225-83 / SGSC4696)).